The primary structure comprises 74 residues: MKIIVLMMMLFAAFSAVVLADKSIEDAALDTVMDRDDDKKECIGHMGWCAWTDGECCEGYRCKLWCRKIIDWLG.

The first 20 residues, 1–20 (MKIIVLMMMLFAAFSAVVLA), serve as a signal peptide directing secretion. Residues 21 to 35 (DKSIEDAALDTVMDR) constitute a propeptide that is removed on maturation. Disulfide bonds link Cys-42–Cys-57, Cys-49–Cys-62, and Cys-56–Cys-66. Position 73 is a leucine amide (Leu-73).

Expressed by the venom gland.

Its subcellular location is the secreted. In terms of biological role, weakly nhibits voltage-gated sodium channels Nav1.7/SCN9A. High concentration of the toxin (3 uM) inhibits Nav1.7/SCN9A currents by 80%. The protein is Mu-Sparatoxin-Hp2 of Heteropoda pingtungensis (Pingtung huntsman spider).